The sequence spans 470 residues: MMTAKAVDKIPVTLSGFMHQLPDSLYPVEDLAAPSVTIFPNGELGGPFDQMNGVAGDGMINIDMTGEKRPLDLPYPSSFAPISAPRNQTFTYMGKFSIDPQYPGASCYPEGIINIVSAGILQGVTPPASTTASSSVTSASPNPLATGPLGVCTMSQTQPELDHLYSPPPPPPPYSGCTGDLYQDPSAFLSPPPTTSTSSLAYQPPPSYPSPKPAMDPGLIPMIPDYPGFFPSPCQRDPHGAAGPDRKPFPCPLDSLRVPPPLTPLSTIRNFTLGGPSAGVTGPGASGGGEGPRLPGSGSAAVTATPYNPHHLPLRPILRPRKYPNRPSKTPVHERPYPCPAEGCDRRFSRSDELTRHIRIHTGHKPFQCRICMRNFSRSDHLTTHIRTHTGEKPFACDYCGRKFARSDERKRHTKIHLRQKERKSSAPSSSASAQSSASGPGGSQAGGSLCGNSAIGGPLASCTSRTRTP.

Over residues 126-141 (PPASTTASSSVTSASP) the composition is skewed to low complexity. Disordered regions lie at residues 126-153 (PPASTTASSSVTSASPNPLATGPLGVCT), 159-178 (PELDHLYSPPPPPPPYSGCT), and 184-211 (DPSAFLSPPPTTSTSSLAYQPPPSYPSP). K247 bears the N6-acetyllysine; by EP300 mark. Positions 275–344 (GPSAGVTGPG…RPYPCPAEGC (70 aa)) are disordered. Positions 281–291 (TGPGASGGGEG) are enriched in gly residues. 3 C2H2-type zinc fingers span residues 337-361 (YPCPAEGCDRRFSRSDELTRHIRIH), 367-389 (FQCRICMRNFSRSDHLTTHIRTH), and 395-417 (FACDYCGRKFARSDERKRHTKIH). The interval 408–470 (DERKRHTKIH…ASCTSRTRTP (63 aa)) is disordered. Residues 412-422 (RHTKIHLRQKE) show a composition bias toward basic residues. Residues 426 to 439 (SAPSSSASAQSSAS) are compositionally biased toward low complexity. The span at 440 to 450 (GPGGSQAGGSL) shows a compositional bias: gly residues.

Belongs to the EGR C2H2-type zinc-finger protein family. In terms of assembly, interacts with HCFC1. Interacts with WWP2. Interacts with UBC9. Interacts with CITED1. Interacts (via phosphorylated form) with SFN. Ubiquitinated by WWP2 leading to proteasomal degradation. In terms of processing, acetylated at Lys-247. May be deacetylated by HDAC6, HDAC10 or SIRT1.

It is found in the nucleus. The protein operates within protein modification; protein sumoylation. Its function is as follows. Sequence-specific DNA-binding transcription factor. Plays a role in hindbrain segmentation by regulating the expression of a subset of homeobox containing genes and in Schwann cell myelination by regulating the expression of genes involved in the formation and maintenance of myelin. Binds to two EGR2-consensus sites EGR2A (5'-CTGTAGGAG-3') and EGR2B (5'-ATGTAGGTG-3') in the HOXB3 enhancer and promotes HOXB3 transcriptional activation. Binds to specific DNA sites located in the promoter region of HOXA4, HOXB2 and ERBB2. Regulates hindbrain segmentation by controlling the expression of Hox genes, such as HOXA4, HOXB3 and HOXB2, and thereby specifying odd and even rhombomeres. Promotes the expression of HOXB3 in the rhombomere r5 in the hindbrain. Regulates myelination in the peripheral nervous system after birth, possibly by regulating the expression of myelin proteins, such as MPZ, and by promoting the differentiation of Schwann cells. Involved in the development of the jaw openener musculature, probably by playing a role in its innervation through trigeminal motor neurons. May play a role in adipogenesis, possibly by regulating the expression of CEBPB. E3 SUMO-protein ligase helping SUMO1 conjugation to its coregulators NAB1 and NAB2, whose sumoylation down-regulates EGR2 transcriptional activity. The chain is E3 SUMO-protein ligase EGR2 (Egr2) from Rattus norvegicus (Rat).